Here is a 101-residue protein sequence, read N- to C-terminus: Small ribosomal subunit protein uS14 (101 aa).

Belongs to the universal ribosomal protein uS14 family. Part of the 30S ribosomal subunit. Contacts proteins S3 and S10.

Binds 16S rRNA, required for the assembly of 30S particles and may also be responsible for determining the conformation of the 16S rRNA at the A site. The chain is Small ribosomal subunit protein uS14 from Shewanella oneidensis (strain ATCC 700550 / JCM 31522 / CIP 106686 / LMG 19005 / NCIMB 14063 / MR-1).